A 126-amino-acid chain; its full sequence is UPF0102 protein DNO_0639 (126 aa).

Belongs to the UPF0102 family.

The chain is UPF0102 protein DNO_0639 from Dichelobacter nodosus (strain VCS1703A).